The primary structure comprises 435 residues: D-aminoacyl-tRNA deacylase (435 aa).

The protein belongs to the DtdA deacylase family. In terms of assembly, monomer. Zn(2+) is required as a cofactor.

The catalysed reaction is a D-aminoacyl-tRNA + H2O = a tRNA + a D-alpha-amino acid + H(+). It carries out the reaction glycyl-tRNA(Ala) + H2O = tRNA(Ala) + glycine + H(+). Functionally, D-aminoacyl-tRNA deacylase with broad substrate specificity. By recycling D-aminoacyl-tRNA to D-amino acids and free tRNA molecules, this enzyme counteracts the toxicity associated with the formation of D-aminoacyl-tRNA entities in vivo. The chain is D-aminoacyl-tRNA deacylase from Methanosphaerula palustris (strain ATCC BAA-1556 / DSM 19958 / E1-9c).